The sequence spans 181 residues: Ribonuclease HII (181 aa).

Positions Met-1–Ile-181 constitute an RNase H type-2 domain. A divalent metal cation is bound by residues Asp-6, Glu-7, and Asp-98.

The protein belongs to the RNase HII family. It depends on Mn(2+) as a cofactor. Mg(2+) serves as cofactor.

The protein localises to the cytoplasm. It carries out the reaction Endonucleolytic cleavage to 5'-phosphomonoester.. Its function is as follows. Endonuclease that specifically degrades the RNA of RNA-DNA hybrids. The sequence is that of Ribonuclease HII from Borreliella burgdorferi (strain ZS7) (Borrelia burgdorferi).